We begin with the raw amino-acid sequence, 76 residues long: MEGKIIFICFLVVLLTLPELISSEVIRKEIPYKKRKFPYKSECRKACATAFTGGDESRIKDVKPGFFKCSCYYSSG.

Residues 1–23 form the signal peptide; the sequence is MEGKIIFICFLVVLLTLPELISS.

Contains 2 disulfide bonds. As to expression, expressed by the venom gland.

It localises to the secreted. Its function is as follows. Acts as a voltage-gated potassium channel inhibitor. In Scolopendra dehaani (Thai centipede), this protein is Kappa-scoloptoxin(15)-Ssd3a.